Consider the following 332-residue polypeptide: Homoarginine-6-hydroxylase 2-ODD-C23.1 (332 aa).

The Fe2OG dioxygenase domain occupies 182-287 (PFWVMRLIGY…RVCVAFFYET (106 aa)). Positions 210, 212, and 268 each coordinate Fe cation. Arg278 is a 2-oxoglutarate binding site.

The protein belongs to the iron/ascorbate-dependent oxidoreductase family. Requires Fe(2+) as cofactor.

Its subcellular location is the cytoplasm. The protein localises to the cytosol. It catalyses the reaction L-homoarginine + 2-oxoglutarate + O2 = 6-hydroxy-L-homoarginine + succinate + CO2. Its activity is regulated as follows. Slightly inhibited by canavanine (Can), the 5-oxa-analog of arginine. Its function is as follows. 2-oxoglutarate-dependent dioxygenase catalyzing homoarginine 6-hydroxylation thus producing 6-hydroxy-L-homoarginine. Guanidine (Gd) is in turn synthesized by the spontaneous conversion of 6-hydroxy-L-homoarginine to (S)-2-amino-6-oxohexanoate (RHEA:79843); guanidine is a nitrogen-rich compound that can serve as a defense or signaling substance. The chain is Homoarginine-6-hydroxylase 2-ODD-C23.1 from Arabidopsis thaliana (Mouse-ear cress).